Here is a 518-residue protein sequence, read N- to C-terminus: Chromosomal replication initiator protein DnaA (518 aa).

Residues 1-72 form a domain I, interacts with DnaA modulators region; sequence MNEFWQHCSA…DLARDFWHSP (72 aa). The tract at residues 72-181 is domain II; sequence PVDVQFVLDP…GESDSTYERS (110 aa). The tract at residues 155–178 is disordered; that stretch reads AAARRTWRPGAAAQAAGGESDSTY. The segment at 182-398 is domain III, AAA+ region; sequence KLNPVLTFDN…GALRKILAYS (217 aa). Residues glycine 226, glycine 228, lysine 229, and threonine 230 each contribute to the ATP site. The segment at 399–518 is domain IV, binds dsDNA; that stretch reads KFHGREITIE…LHVLEQTLKG (120 aa).

Belongs to the DnaA family. Oligomerizes as a right-handed, spiral filament on DNA at oriC.

It localises to the cytoplasm. Functionally, plays an essential role in the initiation and regulation of chromosomal replication. ATP-DnaA binds to the origin of replication (oriC) to initiate formation of the DNA replication initiation complex once per cell cycle. Binds the DnaA box (a 9 base pair repeat at the origin) and separates the double-stranded (ds)DNA. Forms a right-handed helical filament on oriC DNA; dsDNA binds to the exterior of the filament while single-stranded (ss)DNA is stabiized in the filament's interior. The ATP-DnaA-oriC complex binds and stabilizes one strand of the AT-rich DNA unwinding element (DUE), permitting loading of DNA polymerase. After initiation quickly degrades to an ADP-DnaA complex that is not apt for DNA replication. Binds acidic phospholipids. This Paraburkholderia phymatum (strain DSM 17167 / CIP 108236 / LMG 21445 / STM815) (Burkholderia phymatum) protein is Chromosomal replication initiator protein DnaA.